We begin with the raw amino-acid sequence, 712 residues long: MLGKGIKKSWGWLGLTVLLLGSPCGWAAEFSASFKGTDIQEFINTVSKNLNKTVIIDPTVRGTISVRSYDMMDEGQYYQFFLSVLDVYGFSVVPMDNGVLKVIRSKDAKSSSIPLANNEQPGVGDELVTRVVPLNNVAARDLAPLLRQLNDNAGAGTVVHYEPSNVLLMTGRAAVIKRLVDIVNTVDKTGDREMITVSLNYASAEDVAKLVNDLNKTDEKNALPSTMLANVVADGRTNSVVVSGEENTSPCAVEMIRQLDRKQVAQGGTKVIYLKYAKALDLIEVLAGNGTSGNRNSSSTNSSRPSSTRSSSTLNNSNSSSSGSSSGSGSSSSSSSSSMGFGSAFGSANSSGGRTIVIQGKEVTVRAHDQTNSLIITRPPDIMRDLEQVINQLDIRRPQVLVEAIIAEIQDADGLNLGIQWANKRAGMTQFTNTGIPISTAMIGTDQFRSDGTLTTAYASALSNFNGITAGFYRGNWSMLLTALSSDGKNDVLATPSIVTLDNMEATFNVGQEVPVLTGSQTTVGSGDNIFNTVERKTVGIKLRVKPQINEGDSVLLQIEQEVSSVAEGNGSSNSSLGVTFNTRTVNNAVMVTNRETVVVGGLLDKTAIETNNKVPLLGDIPWLGSLFRSKTQTMSKRNLMLFLRPTIIRDPQQYQQASISKYNSFNNEQQQQRGQGNSVLDNNTLRLSGGNTYTFRQVQSSISAFYQPEGR.

Positions 1 to 27 are cleaved as a signal peptide; that stretch reads MLGKGIKKSWGWLGLTVLLLGSPCGWA. An N0 region spans residues 28–124; sequence AEFSASFKGT…LANNEQPGVG (97 aa). Positions 126-190 are N1; sequence ELVTRVVPLN…DIVNTVDKTG (65 aa). The interval 191-264 is N2; that stretch reads DREMITVSLN…MIRQLDRKQV (74 aa). The N3 stretch occupies residues 267–394; it reads GGTKVIYLKY…DLEQVINQLD (128 aa). Residues 288–342 form a disordered region; sequence GNGTSGNRNSSSTNSSRPSSTRSSSTLNNSNSSSSGSSSGSGSSSSSSSSSMGFG. Positions 399–651 are secretin; sequence QVLVEAIIAE…LFLRPTIIRD (253 aa). Residues 653–712 form a s domain region; the sequence is QQYQQASISKYNSFNNEQQQQRGQGNSVLDNNTLRLSGGNTYTFRQVQSSISAFYQPEGR.

This sequence belongs to the bacterial secretin family. GSP D subfamily. Forms a cylindrical channel with 15 subunits.

It is found in the cell outer membrane. Functionally, involved in a type II secretion system (T2SS, formerly general secretion pathway, GSP) for the export of proteins. Required for the translocation of the multiple pectic enzymes. This subunit forms the outer membrane channel. The polypeptide is Secretin OutD (outD) (Dickeya chrysanthemi (Pectobacterium chrysanthemi)).